Consider the following 291-residue polypeptide: Beta-lactamase CTX-M-8 (291 aa).

Positions 1–30 (MMRHRVKRMMLMTTACISLLLGSAPLYAQA) are cleaved as a signal peptide. The Nucleophile; acyl-ester intermediate role is filled by Ser-73. Lys-76, Ser-133, Glu-169, and Ser-240 together coordinate a beta-lactam.

Belongs to the class-A beta-lactamase family. In terms of assembly, monomer.

It is found in the secreted. It catalyses the reaction a beta-lactam + H2O = a substituted beta-amino acid. With respect to regulation, inhibited by the beta-lactamase-blocking agents clavulanic acid, tazobactam and sulbactam; in the DH5alpha strain of E.coli. Its function is as follows. Extended-spectrum beta-lactamase (ESBL) which confers resistance to penicillins, as well as first, third and fourth-generation cephalosporins. Has cefotaxime-hydrolyzing activity. Inactive against cephalosporin antibiotic, cefoxitin, and the carbapenem, imipenem. This is Beta-lactamase CTX-M-8 from Citrobacter amalonaticus.